The sequence spans 91 residues: Progonadoliberin-1 (91 aa).

The signal sequence occupies residues 1–23 (MEPIPKLLAGLLLLTLCVVGCSS). Q24 is modified (pyrrolidone carboxylic acid). G33 carries the glycine amide modification.

The protein belongs to the GnRH family. Post-translationally, the precursor is cleaved by ACE, which removes the Gly-Lys-Arg peptide at the C-terminus, leading to mature hormone. The mature form of Gonadoliberin-1 is also cleaved and degraded by ACE.

It is found in the secreted. In terms of biological role, stimulates the secretion of gonadotropins; it stimulates the secretion of both luteinizing and follicle-stimulating hormones. The chain is Progonadoliberin-1 (GNRH1) from Sus scrofa (Pig).